Reading from the N-terminus, the 641-residue chain is MELKGVQPSNGSANGNGTTNAASTEKADTEKQTAERTNWGNGLEFLMSCISVSVGLGNVWRFPFTAYENGGGAFLIPYIIVLFLIGKPMYYLEMIMGQFTSQGTVKIWSVVPGFVGVGYGQAFGTICIISYYSSLLALTLYYLFVSFQSELPWSYCRDEWTNCVNSRPQEYVDNLLTGVSLANESARNLSGIGFVANDETEKLQSSSELYFLNVVIKEKLDISDGVGDPDWKLTLALFVAWVVIFLVIMRGVKSSGKAAYFLALFPYVVLFVLLIRAVTLEGARDGILFFLEPQWGELLNPTVWKEAVVQCFFSLAVGSGPIIMFASYNRFDHGIYRDAMIVTTLDTLTSLLGGITIFAILGNLAHNLQIENIRDVVRSGTGLAFISYPDAISKFQAVPQLFSVLFFFMLFVLGIGSIVALQSTIVTIICDQFKGLKYWKVALITSACGFLMGLVYVTPGGQWILTLVDFYGGTYVVFILAIFELAGIVWVYGLQNFCDDIEFMCNRRVSLYWRMCWSFFTPVMMIIIFIYSMATIEPIKYSELYFPEAANIAGWLLFAIGAAQFPLWGLWYASTHPQGTYWKSLKASLKPSDRWGPANPETRREWVIFKNQKAAQRATQKSTSKLGFFWRKLTNFCGSNK.

The interval 1–34 (MELKGVQPSNGSANGNGTTNAASTEKADTEKQTA) is disordered. Residues 1 to 38 (MELKGVQPSNGSANGNGTTNAASTEKADTEKQTAERTN) lie on the Cytoplasmic side of the membrane. Over residues 9 to 24 (SNGSANGNGTTNAAST) the composition is skewed to low complexity. Basic and acidic residues predominate over residues 25 to 34 (EKADTEKQTA). Transmembrane regions (helical) follow at residues 39 to 59 (WGNGLEFLMSCISVSVGLGNV), 72 to 92 (GAFLIPYIIVLFLIGKPMYYL), and 109 to 129 (SVVPGFVGVGYGQAFGTICII). Asn183 and Asn188 each carry an N-linked (GlcNAc...) asparagine glycan. The next 9 helical transmembrane spans lie at 229–249 (PDWKLTLALFVAWVVIFLVIM), 258–278 (AAYFLALFPYVVLFVLLIRAV), 307–327 (AVVQCFFSLAVGSGPIIMFAS), 341–361 (IVTTLDTLTSLLGGITIFAIL), 401–421 (LFSVLFFFMLFVLGIGSIVAL), 441–461 (VALITSACGFLMGLVYVTPGG), 474–494 (TYVVFILAIFELAGIVWVYGL), 516–536 (CWSFFTPVMMIIIFIYSMATI), and 552–572 (IAGWLLFAIGAAQFPLWGLWY).

It belongs to the sodium:neurotransmitter symporter (SNF) (TC 2.A.22) family.

Its subcellular location is the membrane. In terms of biological role, unusual broad substrate spectrum amino acid:sodium cotransporter that promotes absorption of the D isomers of essential amino acids. Neutral amino acids are the preferred substrates, especially methionine and phenylalanine. This Drosophila yakuba (Fruit fly) protein is Sodium-dependent nutrient amino acid transporter 1.